Reading from the N-terminus, the 268-residue chain is Urease accessory protein UreD (268 aa).

The protein belongs to the UreD family. In terms of assembly, ureD, UreF and UreG form a complex that acts as a GTP-hydrolysis-dependent molecular chaperone, activating the urease apoprotein by helping to assemble the nickel containing metallocenter of UreC. The UreE protein probably delivers the nickel.

Its subcellular location is the cytoplasm. In terms of biological role, required for maturation of urease via the functional incorporation of the urease nickel metallocenter. The chain is Urease accessory protein UreD from Lysinibacillus sphaericus (strain C3-41).